The primary structure comprises 108 residues: uncharacterized protein (108 aa).

Belongs to the UPF0440 family.

This is an uncharacterized protein from Thermococcus kodakarensis (strain ATCC BAA-918 / JCM 12380 / KOD1) (Pyrococcus kodakaraensis (strain KOD1)).